The following is a 949-amino-acid chain: Thrombospondin-4-B (949 aa).

Residues 1-22 form the signal peptide; the sequence is MAGTMHLLTAVSLILMLSSANA. Residues 23–198 form the Laminin G-like domain; the sequence is ESTVYNLLTS…LEELKLAYGD (176 aa). 21 cysteine pairs are disulfide-bonded: Cys276–Cys287, Cys281–Cys296, Cys299–Cys310, Cys316–Cys327, Cys321–Cys336, Cys339–Cys363, Cys369–Cys383, Cys377–Cys392, Cys395–Cys407, Cys413–Cys427, Cys421–Cys437, Cys439–Cys450, Cys466–Cys471, Cys476–Cys496, Cys512–Cys532, Cys535–Cys555, Cys571–Cys591, Cys594–Cys614, Cys632–Cys652, Cys672–Cys692, and Cys708–Cys929. In terms of domain architecture, EGF-like 1; calcium-binding spans 312 to 349; sequence DVDECQFNPCFPGVRCVNMAPGFRCEACPLGFTGKPLE. Residues 365-408 enclose the EGF-like 2; calcium-binding domain; sequence DIDECKGPDNGGCTANSICVNSVGSYQCGRCKTGFTGDQIRGCK. One can recognise an EGF-like 3 domain in the interval 409–451; the sequence is PEKSCGNRLQNPCDPNAQCTEERDGTITCQCGIGWAGNGYLCG. 8 TSP type-3 repeats span residues 452 to 484, 485 to 520, 521 to 543, 544 to 579, 580 to 602, 603 to 640, 641 to 680, and 681 to 716; these read KDTD…NSGQ, EDAD…NINQ, QNSD…NPDQ, RDTD…NRDQ, LDRD…NPNQ, SDID…NSSQ, LDTD…NPEQ, and IDDN…EITL. The interval 578–671 is disordered; sequence DQLDRDGDGV…PDSLPPGPDN (94 aa). Asn601 and Asn637 each carry an N-linked (GlcNAc...) asparagine glycan. Residues 649–660 show a composition bias toward acidic residues; the sequence is GDECDDDDDNDG. One can recognise a TSP C-terminal domain in the interval 720 to 934; it reads RAYQTVVLDP…LKYRCNDTIP (215 aa). N-linked (GlcNAc...) asparagine glycosylation occurs at Asn930.

Belongs to the thrombospondin family. Homotrimer; disulfide-linked.

The protein localises to the endoplasmic reticulum. The protein resides in the sarcoplasmic reticulum. It localises to the secreted. It is found in the extracellular space. Its subcellular location is the extracellular matrix. Adhesive glycoprotein that mediates cell-to-cell and cell-to-matrix interactions and may be involved in various processes including cellular proliferation, migration, adhesion and attachment. May play a role in ER stress response. The chain is Thrombospondin-4-B (thbs4b) from Danio rerio (Zebrafish).